Here is a 507-residue protein sequence, read N- to C-terminus: ATP synthase subunit alpha, chloroplastic (507 aa).

ATP is bound at residue 170-177 (GDRQTGKT).

It belongs to the ATPase alpha/beta chains family. As to quaternary structure, F-type ATPases have 2 components, CF(1) - the catalytic core - and CF(0) - the membrane proton channel. CF(1) has five subunits: alpha(3), beta(3), gamma(1), delta(1), epsilon(1). CF(0) has four main subunits: a, b, b' and c.

The protein resides in the plastid. The protein localises to the chloroplast thylakoid membrane. It catalyses the reaction ATP + H2O + 4 H(+)(in) = ADP + phosphate + 5 H(+)(out). Its function is as follows. Produces ATP from ADP in the presence of a proton gradient across the membrane. The alpha chain is a regulatory subunit. The chain is ATP synthase subunit alpha, chloroplastic from Marchantia polymorpha (Common liverwort).